The primary structure comprises 234 residues: UPF0502 protein BPSS1373 (234 aa).

This sequence belongs to the UPF0502 family.

The chain is UPF0502 protein BPSS1373 from Burkholderia pseudomallei (strain K96243).